A 253-amino-acid polypeptide reads, in one-letter code: Imidazole glycerol phosphate synthase subunit HisF (253 aa).

Residues aspartate 11 and aspartate 130 contribute to the active site.

This sequence belongs to the HisA/HisF family. Heterodimer of HisH and HisF.

Its subcellular location is the cytoplasm. The catalysed reaction is 5-[(5-phospho-1-deoxy-D-ribulos-1-ylimino)methylamino]-1-(5-phospho-beta-D-ribosyl)imidazole-4-carboxamide + L-glutamine = D-erythro-1-(imidazol-4-yl)glycerol 3-phosphate + 5-amino-1-(5-phospho-beta-D-ribosyl)imidazole-4-carboxamide + L-glutamate + H(+). It participates in amino-acid biosynthesis; L-histidine biosynthesis; L-histidine from 5-phospho-alpha-D-ribose 1-diphosphate: step 5/9. IGPS catalyzes the conversion of PRFAR and glutamine to IGP, AICAR and glutamate. The HisF subunit catalyzes the cyclization activity that produces IGP and AICAR from PRFAR using the ammonia provided by the HisH subunit. This Cereibacter sphaeroides (strain KD131 / KCTC 12085) (Rhodobacter sphaeroides) protein is Imidazole glycerol phosphate synthase subunit HisF.